The chain runs to 76 residues: MDAFTAMFPELFPIEEGLEDALVGSLSDTSAASASATHTSPASTDTFDDADILAILADAEHWRGGNTTAHGWCVVA.

Residue cysteine 73 is modified to Cysteine methyl ester. Residue cysteine 73 is the site of S-farnesyl cysteine attachment. Positions 74 to 76 are cleaved as a propeptide — removed in mature form; it reads VVA.

The protein localises to the cell membrane. In terms of biological role, activates B-regulated development. The protein is Mating-type pheromone BBP1(1) (BBP1(1)) of Schizophyllum commune (Split gill fungus).